Consider the following 283-residue polypeptide: Orotidine 5'-phosphate decarboxylase (283 aa).

Catalysis depends on K97, which acts as the Proton donor.

The protein belongs to the OMP decarboxylase family. Type 2 subfamily.

It carries out the reaction orotidine 5'-phosphate + H(+) = UMP + CO2. It participates in pyrimidine metabolism; UMP biosynthesis via de novo pathway; UMP from orotate: step 2/2. In Clostridium botulinum (strain ATCC 19397 / Type A), this protein is Orotidine 5'-phosphate decarboxylase.